A 454-amino-acid chain; its full sequence is Bifunctional protein GlmU (454 aa).

A pyrophosphorylase region spans residues 1 to 231; the sequence is MSRPTVSLIV…EAETLGVNTR (231 aa). UDP-N-acetyl-alpha-D-glucosamine-binding positions include 11–14, Lys-25, Gln-78, 83–84, 106–108, Gly-143, Glu-157, Asn-172, and Asn-229; these read LAAG, GT, and YGD. Position 108 (Asp-108) interacts with Mg(2+). Asn-229 serves as a coordination point for Mg(2+). The linker stretch occupies residues 232–252; sequence AQLAAAEAEFQRRARAAALED. The N-acetyltransferase stretch occupies residues 253–454; that stretch reads GVTLTAPDTV…ARDASKKGTN (202 aa). Arg-318 and Lys-336 together coordinate UDP-N-acetyl-alpha-D-glucosamine. Catalysis depends on His-348, which acts as the Proton acceptor. The UDP-N-acetyl-alpha-D-glucosamine site is built by Tyr-351 and Asn-362. Acetyl-CoA-binding positions include Ala-365, 371 to 372, Ser-390, Ser-408, and Arg-425; that span reads NY.

In the N-terminal section; belongs to the N-acetylglucosamine-1-phosphate uridyltransferase family. The protein in the C-terminal section; belongs to the transferase hexapeptide repeat family. Homotrimer. It depends on Mg(2+) as a cofactor.

The protein resides in the cytoplasm. The catalysed reaction is alpha-D-glucosamine 1-phosphate + acetyl-CoA = N-acetyl-alpha-D-glucosamine 1-phosphate + CoA + H(+). It carries out the reaction N-acetyl-alpha-D-glucosamine 1-phosphate + UTP + H(+) = UDP-N-acetyl-alpha-D-glucosamine + diphosphate. It functions in the pathway nucleotide-sugar biosynthesis; UDP-N-acetyl-alpha-D-glucosamine biosynthesis; N-acetyl-alpha-D-glucosamine 1-phosphate from alpha-D-glucosamine 6-phosphate (route II): step 2/2. The protein operates within nucleotide-sugar biosynthesis; UDP-N-acetyl-alpha-D-glucosamine biosynthesis; UDP-N-acetyl-alpha-D-glucosamine from N-acetyl-alpha-D-glucosamine 1-phosphate: step 1/1. Its pathway is bacterial outer membrane biogenesis; LPS lipid A biosynthesis. Its function is as follows. Catalyzes the last two sequential reactions in the de novo biosynthetic pathway for UDP-N-acetylglucosamine (UDP-GlcNAc). The C-terminal domain catalyzes the transfer of acetyl group from acetyl coenzyme A to glucosamine-1-phosphate (GlcN-1-P) to produce N-acetylglucosamine-1-phosphate (GlcNAc-1-P), which is converted into UDP-GlcNAc by the transfer of uridine 5-monophosphate (from uridine 5-triphosphate), a reaction catalyzed by the N-terminal domain. The protein is Bifunctional protein GlmU of Cereibacter sphaeroides (strain ATCC 17025 / ATH 2.4.3) (Rhodobacter sphaeroides).